The sequence spans 347 residues: Protein RecA (347 aa).

An ATP-binding site is contributed by 64–71 (GPESSGKT).

This sequence belongs to the RecA family.

Its subcellular location is the cytoplasm. Functionally, can catalyze the hydrolysis of ATP in the presence of single-stranded DNA, the ATP-dependent uptake of single-stranded DNA by duplex DNA, and the ATP-dependent hybridization of homologous single-stranded DNAs. It interacts with LexA causing its activation and leading to its autocatalytic cleavage. The polypeptide is Protein RecA (Bartonella tribocorum (strain CIP 105476 / IBS 506)).